The following is a 127-amino-acid chain: Small ribosomal subunit protein uS11 (127 aa).

The protein belongs to the universal ribosomal protein uS11 family. As to quaternary structure, part of the 30S ribosomal subunit. Interacts with proteins S7 and S18. Binds to IF-3.

Its function is as follows. Located on the platform of the 30S subunit, it bridges several disparate RNA helices of the 16S rRNA. Forms part of the Shine-Dalgarno cleft in the 70S ribosome. In Streptococcus pyogenes serotype M49 (strain NZ131), this protein is Small ribosomal subunit protein uS11.